Reading from the N-terminus, the 346-residue chain is Thiamine-phosphate synthase (346 aa).

Residues 1–125 (MSVTPNPDQH…SKISAQIRYE (125 aa)) form a unknown region. The thiamine-phosphate synthase stretch occupies residues 126–346 (IYDLEVIILK…SKELLGKLKK (221 aa)). 4-amino-2-methyl-5-(diphosphooxymethyl)pyrimidine is bound by residues 177 to 181 (QYRCK) and Asn-209. Positions 210 and 229 each coordinate Mg(2+). Ser-248 serves as a coordination point for 4-amino-2-methyl-5-(diphosphooxymethyl)pyrimidine. 274–276 (TKS) contributes to the 2-[(2R,5Z)-2-carboxy-4-methylthiazol-5(2H)-ylidene]ethyl phosphate binding site. Lys-277 contributes to the 4-amino-2-methyl-5-(diphosphooxymethyl)pyrimidine binding site. Residue Gly-304 coordinates 2-[(2R,5Z)-2-carboxy-4-methylthiazol-5(2H)-ylidene]ethyl phosphate.

It belongs to the thiamine-phosphate synthase family. It depends on Mg(2+) as a cofactor.

The enzyme catalyses 2-[(2R,5Z)-2-carboxy-4-methylthiazol-5(2H)-ylidene]ethyl phosphate + 4-amino-2-methyl-5-(diphosphooxymethyl)pyrimidine + 2 H(+) = thiamine phosphate + CO2 + diphosphate. The catalysed reaction is 2-(2-carboxy-4-methylthiazol-5-yl)ethyl phosphate + 4-amino-2-methyl-5-(diphosphooxymethyl)pyrimidine + 2 H(+) = thiamine phosphate + CO2 + diphosphate. It carries out the reaction 4-methyl-5-(2-phosphooxyethyl)-thiazole + 4-amino-2-methyl-5-(diphosphooxymethyl)pyrimidine + H(+) = thiamine phosphate + diphosphate. It functions in the pathway cofactor biosynthesis; thiamine diphosphate biosynthesis; thiamine phosphate from 4-amino-2-methyl-5-diphosphomethylpyrimidine and 4-methyl-5-(2-phosphoethyl)-thiazole: step 1/1. Functionally, condenses 4-methyl-5-(beta-hydroxyethyl)thiazole monophosphate (THZ-P) and 2-methyl-4-amino-5-hydroxymethyl pyrimidine pyrophosphate (HMP-PP) to form thiamine monophosphate (TMP). This chain is Thiamine-phosphate synthase, found in Prochlorococcus marinus (strain SARG / CCMP1375 / SS120).